Reading from the N-terminus, the 622-residue chain is Probable potassium transport system protein Kup 2 (622 aa).

12 helical membrane passes run 9–29, 46–66, 99–119, 137–157, 169–189, 213–233, 247–267, 285–305, 337–357, 363–383, 396–416, and 419–439; these read LSGV…TSPL, PASI…VVSV, TPLL…EVVI, PSLD…LFAI, FAPI…NSIF, ASFF…ALYA, WFMV…ALLL, ALLP…QAVI, IYIP…IMSF, LAAA…ILSC, LVAA…AANL, and IFSG…VMTS.

The protein belongs to the HAK/KUP transporter (TC 2.A.72) family.

Its subcellular location is the cell inner membrane. It carries out the reaction K(+)(in) + H(+)(in) = K(+)(out) + H(+)(out). Its function is as follows. Transport of potassium into the cell. Likely operates as a K(+):H(+) symporter. This chain is Probable potassium transport system protein Kup 2, found in Aeromonas hydrophila subsp. hydrophila (strain ATCC 7966 / DSM 30187 / BCRC 13018 / CCUG 14551 / JCM 1027 / KCTC 2358 / NCIMB 9240 / NCTC 8049).